A 276-amino-acid polypeptide reads, in one-letter code: Putative ripening-related protein 5 (276 aa).

The first 18 residues, 1 to 18 (MAMIFLLAALSTTHLASS), serve as a signal peptide directing secretion.

This sequence belongs to the kiwellin family.

It localises to the secreted. This Oryza sativa subsp. japonica (Rice) protein is Putative ripening-related protein 5.